We begin with the raw amino-acid sequence, 520 residues long: Hydroxymethylglutaryl-CoA synthase, cytoplasmic (520 aa).

Position 4 is a phosphoserine (S4). (3S)-3-hydroxy-3-methylglutaryl-CoA contacts are provided by D43 and A44. Position 44–46 (44–46 (AGK)) interacts with CoA. K46 carries the post-translational modification N6-acetyllysine. E95 functions as the Proton donor/acceptor in the catalytic mechanism. Residues C129, N167, T171, S221, and H264 each contribute to the (3S)-3-hydroxy-3-methylglutaryl-CoA site. C129 acts as the Acyl-thioester intermediate in catalysis. N167 contributes to the CoA binding site. Position 221 (S221) interacts with CoA. H264 (proton donor/acceptor) is an active-site residue. The CoA site is built by K269 and K273. K273, N343, and S377 together coordinate (3S)-3-hydroxy-3-methylglutaryl-CoA. K273 bears the N6-acetyllysine mark. A disordered region spans residues 487 to 520 (NTATEHIPSPAKKVPRLPATSGEPESAVISNGEH). Residues S495 and S516 each carry the phosphoserine modification.

This sequence belongs to the thiolase-like superfamily. HMG-CoA synthase family. In terms of assembly, homodimer.

Its subcellular location is the cytoplasm. The catalysed reaction is acetoacetyl-CoA + acetyl-CoA + H2O = (3S)-3-hydroxy-3-methylglutaryl-CoA + CoA + H(+). The protein operates within metabolic intermediate biosynthesis; (R)-mevalonate biosynthesis; (R)-mevalonate from acetyl-CoA: step 2/3. Catalyzes the condensation of acetyl-CoA with acetoacetyl-CoA to form HMG-CoA, which is converted by HMG-CoA reductase (HMGCR) into mevalonate, a precursor for cholesterol synthesis. The sequence is that of Hydroxymethylglutaryl-CoA synthase, cytoplasmic from Rattus norvegicus (Rat).